Consider the following 181-residue polypeptide: MLKFIKSSTKESEWLKNPKNEICFVGRSNVGKSSLINALFKTRVVKVGKTPGKTKLINFFEDERGNSVVDLPGYGYAKLSKEAQSEISDMIFEFLTKRVEIKKLFLLIDSRLGFTPIDQEFYDFLKEAPFEIIIVATKRDKLNQSQTYQIKKSLDELKVKYFLVSITKKEFLQDLVNNLFN.

In terms of domain architecture, EngB-type G spans 18–181; sequence PKNEICFVGR…LQDLVNNLFN (164 aa). GTP is bound by residues 26-33, 52-56, 70-73, 137-140, and 164-166; these read GRSNVGKS, GKTKL, DLPG, TKRD, and VSI. Residues Ser-33 and Thr-54 each coordinate Mg(2+).

The protein belongs to the TRAFAC class TrmE-Era-EngA-EngB-Septin-like GTPase superfamily. EngB GTPase family. Mg(2+) is required as a cofactor.

In terms of biological role, necessary for normal cell division and for the maintenance of normal septation. The chain is Probable GTP-binding protein EngB from Mycoplasma mobile (strain ATCC 43663 / 163K / NCTC 11711) (Mesomycoplasma mobile).